The primary structure comprises 513 residues: GMP synthase [glutamine-hydrolyzing] (513 aa).

Positions 3 to 192 (TVVVLDYGSQ…VSKVAKMEKN (190 aa)) constitute a Glutamine amidotransferase type-1 domain. Cys-80 functions as the Nucleophile in the catalytic mechanism. Residues His-166 and Glu-168 contribute to the active site. Residues 193–388 (WKMTDFIEEK…LGLPDEMINR (196 aa)) form the GMPS ATP-PPase domain. 220–226 (SGGVDSS) contributes to the ATP binding site.

In terms of assembly, homodimer.

It carries out the reaction XMP + L-glutamine + ATP + H2O = GMP + L-glutamate + AMP + diphosphate + 2 H(+). The protein operates within purine metabolism; GMP biosynthesis; GMP from XMP (L-Gln route): step 1/1. In terms of biological role, catalyzes the synthesis of GMP from XMP. The sequence is that of GMP synthase [glutamine-hydrolyzing] from Thermosipho africanus (strain TCF52B).